The following is a 243-amino-acid chain: MADATPGAEYWTALGWQPSTEQVDQLATLQTLLREWNEKVNLTRLVEGDDYWINQVFDSLWPLAHELKTPHQPRTCIDVGTGGGFPGLAIAIALPGSHMTLLDSVGRKTAAVEAMASRLGLADRVAVRTERIETTGHDRACRGQFDLAMARAVAAAPVVAEYLVPLLKPKGEALLFRGQWSEEDTTEFSSVISPLKAQLTGVQTCQLPAKRGIRHLLRVQPIGSCPSSYPRAVGIPSRTPLGS.

Residues G80, F85, 132–133, and R151 contribute to the S-adenosyl-L-methionine site; that span reads IE.

The protein belongs to the methyltransferase superfamily. RNA methyltransferase RsmG family.

The protein resides in the cytoplasm. In terms of biological role, specifically methylates the N7 position of a guanine in 16S rRNA. This is Ribosomal RNA small subunit methyltransferase G from Synechococcus sp. (strain CC9902).